Reading from the N-terminus, the 693-residue chain is Phosphoribosylformylglycinamidine synthase subunit PurL (693 aa).

The active site involves H34. The ATP site is built by Y37 and K76. Mg(2+) is bound at residue E78. Substrate is bound by residues 79–82 and R101; that span reads SHNH. The Proton acceptor role is filled by H80. D102 is a Mg(2+) binding site. Substrate is bound at residue Q222. Mg(2+) is bound at residue D248. Substrate is bound at residue 292-294; the sequence is ETQ. Positions 470 and 507 each coordinate ATP. S510 contacts substrate.

This sequence belongs to the FGAMS family. In terms of assembly, monomer. Part of the FGAM synthase complex composed of 1 PurL, 1 PurQ and 2 PurS subunits.

The protein resides in the cytoplasm. The enzyme catalyses N(2)-formyl-N(1)-(5-phospho-beta-D-ribosyl)glycinamide + L-glutamine + ATP + H2O = 2-formamido-N(1)-(5-O-phospho-beta-D-ribosyl)acetamidine + L-glutamate + ADP + phosphate + H(+). Its pathway is purine metabolism; IMP biosynthesis via de novo pathway; 5-amino-1-(5-phospho-D-ribosyl)imidazole from N(2)-formyl-N(1)-(5-phospho-D-ribosyl)glycinamide: step 1/2. Its function is as follows. Part of the phosphoribosylformylglycinamidine synthase complex involved in the purines biosynthetic pathway. Catalyzes the ATP-dependent conversion of formylglycinamide ribonucleotide (FGAR) and glutamine to yield formylglycinamidine ribonucleotide (FGAM) and glutamate. The FGAM synthase complex is composed of three subunits. PurQ produces an ammonia molecule by converting glutamine to glutamate. PurL transfers the ammonia molecule to FGAR to form FGAM in an ATP-dependent manner. PurS interacts with PurQ and PurL and is thought to assist in the transfer of the ammonia molecule from PurQ to PurL. This chain is Phosphoribosylformylglycinamidine synthase subunit PurL, found in Pyrobaculum calidifontis (strain DSM 21063 / JCM 11548 / VA1).